Here is a 105-residue protein sequence, read N- to C-terminus: Large ribosomal subunit protein uL24 (105 aa).

This sequence belongs to the universal ribosomal protein uL24 family. Part of the 50S ribosomal subunit.

Functionally, one of two assembly initiator proteins, it binds directly to the 5'-end of the 23S rRNA, where it nucleates assembly of the 50S subunit. Its function is as follows. One of the proteins that surrounds the polypeptide exit tunnel on the outside of the subunit. The chain is Large ribosomal subunit protein uL24 from Buchnera aphidicola subsp. Cinara cedri (strain Cc).